Here is a 1427-residue protein sequence, read N- to C-terminus: Protein NPAT (1427 aa).

An interaction with MIZF region spans residues 1-318 (MLLPSDVARL…EEAIQDILEQ (318 aa)). Residues 3-35 (LPSDVARLVLGYLQQENLISTCQTFILESSDLK) enclose the LisH domain. 2 required for activation of histone gene transcription and interaction with MIZF regions span residues 5–25 (SDVA…STCQ) and 121–145 (KRQR…YLSG). Residues 199–231 (KKAHASLMSPGRRKSESQRKSTTLSGPHSTIRN) form a disordered region. At serine 207 the chain carries Phosphoserine. Polar residues predominate over residues 218–231 (KSTTLSGPHSTIRN). The interval 262 to 338 (KLAENINKFL…FDLFDYGKTK (77 aa)) is mediates transcriptional activation. Serine 554 and serine 599 each carry phosphoserine. A compositionally biased stretch (polar residues) spans 628-644 (SLSSTKQPSNDSASVEL). Disordered stretches follow at residues 628–669 (SLSS…VKEE) and 683–732 (EKVA…SAEI). The interval 629-653 (LSSTKQPSNDSASVELNHTENEAQA) is required for acceleration of G1 phase. Residues 654–665 (SKSENSQEPSSS) show a composition bias toward low complexity. Positions 695–711 (VENSHSLPPESVCSSVG) are enriched in polar residues. Serine 775 and serine 779 each carry phosphoserine; by CDK2. Required for acceleration of G1 phase stretches follow at residues 828–853 (QNED…IQLM) and 1039–1054 (KSEE…SIVP). 2 disordered regions span residues 1095-1121 (FPNL…EKEK) and 1133-1152 (SAIS…KVSP). Residues 1097-1114 (NLDSPNVSSTLKPPSNNA) show a composition bias toward polar residues. Serine 1100 bears the Phosphoserine; by CDK2 mark. Residues lysine 1116 and lysine 1149 each participate in a glycyl lysine isopeptide (Lys-Gly) (interchain with G-Cter in SUMO2) cross-link. Over residues 1140 to 1151 (TIRETQSEKKVS) the composition is skewed to basic and acidic residues. Residues serine 1151 and serine 1200 each carry the phosphoserine modification. Lysine 1228 is modified (N6-acetyllysine). The segment at 1228-1252 (KDLKQEQTKSASSLITTEMLQDIQR) is required for acceleration of G1 phase. Disordered regions lie at residues 1253-1327 (HSSV…SENS) and 1348-1413 (SATP…FPAG). Phosphoserine is present on serine 1254. Position 1270 is a phosphothreonine; by CDK2 (threonine 1270). Residues 1276–1285 (GEKHKEEPID) are compositionally biased toward basic and acidic residues. Lysine 1280 is covalently cross-linked (Glycyl lysine isopeptide (Lys-Gly) (interchain with G-Cter in SUMO2)). The segment at 1325–1349 (ENSVNMAAHTLMILSRAAISRTTSA) is required for acceleration of G1 phase. Positions 1348-1365 (SATPLKDNTQQFRASSRS) are enriched in polar residues. Position 1350 is a phosphothreonine; by CDK2 (threonine 1350). Residues 1371 to 1382 (KIEELDERERNS) show a composition bias toward basic and acidic residues. Positions 1383–1394 (RPSSKNLTNSSI) are enriched in polar residues. Residues 1396 to 1406 (MKKKKIKKKKL) are compositionally biased toward basic residues.

It belongs to the NPAT family. Interacts with the cylin/CDK complexes CCNE1/CDK2 and CCNA1/CDK2. Interacts with BZW1, CASP8AP2, CREBBP, MIZF and YY1. Interacts with the RUVBL1, RUVBL2 and TRRAP subunits of the NuA4 complex. May also interact with GAPDH, NME1, NME2 and STIP1. Phosphorylated at Ser-775, Ser-779, Ser-1100, Thr-1270 and Thr-1350 by CCNE1/CDK2 at G1-S transition and until prophase, which promotes association with histone gene clusters and stimulates activation of histone transcription. Also phosphorylated by CCNA1/CDK2 in vitro. As to expression, ubiquitously expressed.

Its subcellular location is the nucleus. It localises to the cajal body. Required for progression through the G1 and S phases of the cell cycle and for S phase entry. Activates transcription of the histone H2A, histone H2B, histone H3 and histone H4 genes in conjunction with MIZF. Also positively regulates the ATM, MIZF and PRKDC promoters. Transcriptional activation may be accomplished at least in part by the recruitment of the NuA4 histone acetyltransferase (HAT) complex to target gene promoters. The chain is Protein NPAT (NPAT) from Homo sapiens (Human).